The chain runs to 163 residues: Transmembrane protein 278 (163 aa).

Residues 1–37 (MSEQGRETEEEEGGGGASDTAPMLPRGPPDHQASALT) are disordered. Transmembrane regions (helical) follow at residues 51–71 (LLAG…LVLL) and 105–125 (AALI…ASAV). Residues 136 to 148 (LLPPPAGTPGPRR) show a composition bias toward pro residues. The tract at residues 136 to 156 (LLPPPAGTPGPRRPPGRPDED) is disordered.

It belongs to the TMEM88 family.

It localises to the membrane. The protein is Transmembrane protein 278 of Homo sapiens (Human).